The sequence spans 962 residues: Putative RNA Helicase B962L (962 aa).

Residues 43 to 229 enclose the Helicase ATP-binding domain; it reads IPTSLADRVL…FGIGKENIIL (187 aa). ATP is bound at residue 56 to 63; that stretch reads SRTGSGKS. The DEAH box motif lies at 167-170; it reads DEAH. Residues 253-459 form the Helicase C-terminal domain; sequence ACETALTIHK…TIKKNKEGVF (207 aa). A helical membrane pass occupies residues 521-541; it reads GYFWQAAISDIATILAVVSVA.

Belongs to the DEAD box helicase family. DEAH subfamily.

The protein resides in the host membrane. It is found in the virion. The catalysed reaction is ATP + H2O = ADP + phosphate + H(+). This chain is Putative RNA Helicase B962L, found in African swine fever virus (isolate Warthog/Namibia/Wart80/1980) (ASFV).